Reading from the N-terminus, the 330-residue chain is Cathepsin S (330 aa).

The signal sequence occupies residues 1–17 (MAVLGAPGVLCDNGATA). Residues 18-112 (ERPTLDHHWD…GTLKSSSNQT (95 aa)) constitute a propeptide, activation peptide. Residues Asn-100 and Asn-110 are each glycosylated (N-linked (GlcNAc...) asparagine). 4 disulfide bridges follow: Cys-124–Cys-222, Cys-134–Cys-179, Cys-168–Cys-211, and Cys-271–Cys-319. Cys-137 is a catalytic residue. Residues His-277 and Asn-297 contribute to the active site.

This sequence belongs to the peptidase C1 family. In terms of assembly, monomer. In terms of tissue distribution, highest levels occur in the ileum followed by spleen, brain, thyroid, ovary and uterus. Low levels are found in the liver, kidney, jejunum and lung with lowest levels in the heart.

The protein localises to the lysosome. Its subcellular location is the secreted. It is found in the cytoplasmic vesicle. The protein resides in the phagosome. It catalyses the reaction Similar to cathepsin L, but with much less activity on Z-Phe-Arg-|-NHMec, and more activity on the Z-Val-Val-Arg-|-Xaa compound.. Its function is as follows. Thiol protease. Key protease responsible for the removal of the invariant chain from MHC class II molecules and MHC class II antigen presentation. The bond-specificity of this proteinase is in part similar to the specificities of cathepsin L. The polypeptide is Cathepsin S (Ctss) (Rattus norvegicus (Rat)).